The sequence spans 287 residues: ATP synthase subunit a (287 aa).

The next 6 membrane-spanning stretches (helical) occupy residues Leu37–Ala57, Phe96–Leu116, Leu149–Leu169, Pro187–Ala207, Glu224–Val244, and Thr266–Ala286.

It belongs to the ATPase A chain family. As to quaternary structure, F-type ATPases have 2 components, CF(1) - the catalytic core - and CF(0) - the membrane proton channel. CF(1) has five subunits: alpha(3), beta(3), gamma(1), delta(1), epsilon(1). CF(0) has three main subunits: a(1), b(2) and c(9-12). The alpha and beta chains form an alternating ring which encloses part of the gamma chain. CF(1) is attached to CF(0) by a central stalk formed by the gamma and epsilon chains, while a peripheral stalk is formed by the delta and b chains.

Its subcellular location is the cell inner membrane. Functionally, key component of the proton channel; it plays a direct role in the translocation of protons across the membrane. The polypeptide is ATP synthase subunit a (Acidovorax sp. (strain JS42)).